The sequence spans 89 residues: Small ribosomal subunit protein uS15 (89 aa).

Belongs to the universal ribosomal protein uS15 family. As to quaternary structure, part of the 30S ribosomal subunit. Forms a bridge to the 50S subunit in the 70S ribosome, contacting the 23S rRNA.

Its function is as follows. One of the primary rRNA binding proteins, it binds directly to 16S rRNA where it helps nucleate assembly of the platform of the 30S subunit by binding and bridging several RNA helices of the 16S rRNA. Forms an intersubunit bridge (bridge B4) with the 23S rRNA of the 50S subunit in the ribosome. This chain is Small ribosomal subunit protein uS15, found in Thiobacillus denitrificans (strain ATCC 25259 / T1).